The sequence spans 255 residues: Acetylglutamate kinase (255 aa).

Residues glycine 40–glycine 41, arginine 62, and asparagine 153 contribute to the substrate site.

It belongs to the acetylglutamate kinase family. ArgB subfamily.

Its subcellular location is the cytoplasm. It carries out the reaction N-acetyl-L-glutamate + ATP = N-acetyl-L-glutamyl 5-phosphate + ADP. It functions in the pathway amino-acid biosynthesis; L-arginine biosynthesis; N(2)-acetyl-L-ornithine from L-glutamate: step 2/4. Catalyzes the ATP-dependent phosphorylation of N-acetyl-L-glutamate. The chain is Acetylglutamate kinase from Bacillus cereus (strain ZK / E33L).